The primary structure comprises 253 residues: Uridine phosphorylase (253 aa).

The protein belongs to the PNP/UDP phosphorylase family. Homohexamer.

It localises to the cytoplasm. It carries out the reaction uridine + phosphate = alpha-D-ribose 1-phosphate + uracil. It functions in the pathway pyrimidine metabolism; UMP biosynthesis via salvage pathway; uracil from uridine (phosphorylase route): step 1/1. Catalyzes the reversible phosphorylytic cleavage of uridine to uracil and ribose-1-phosphate. Shows weak activity towards deoxyuridine and thymidine. The produced molecules are then utilized as carbon and energy sources or in the rescue of pyrimidine bases for nucleotide synthesis. This Escherichia coli (strain K12) protein is Uridine phosphorylase.